A 130-amino-acid chain; its full sequence is Small ribosomal subunit protein uS11c (130 aa).

The protein belongs to the universal ribosomal protein uS11 family. Part of the 30S ribosomal subunit.

The protein localises to the plastid. It localises to the chloroplast. The protein is Small ribosomal subunit protein uS11c of Marchantia polymorpha (Common liverwort).